The chain runs to 411 residues: Putative glycosyltransferase SCO3672 (411 aa).

10 consecutive transmembrane segments (helical) span residues 7–27 (IAAA…LAAL), 45–65 (PVPL…AWAG), 70–90 (VVPL…VGAL), 120–140 (ETGP…TGAF), 148–168 (GVVG…AAVE), 169–189 (LMDG…GFLL), 197–217 (IALG…AAVL), 227–247 (GAGV…LVLL), 277–297 (GVVV…VLAH), and 301–321 (VGGQ…LGLL).

It belongs to the glycosyltransferase 4 family.

It localises to the cell membrane. The chain is Putative glycosyltransferase SCO3672 from Streptomyces coelicolor (strain ATCC BAA-471 / A3(2) / M145).